Consider the following 511-residue polypeptide: Coatomer subunit delta (511 aa).

The span at Q168 to G177 shows a compositional bias: basic and acidic residues. Positions Q168–S188 are disordered. The residue at position 223 (S223) is a Phosphoserine. 2 positions are modified to N6-acetyllysine: K233 and K241. At S244 the chain carries Phosphoserine. In terms of domain architecture, MHD spans M271–L511. K309 and K351 each carry N6-acetyllysine. S493 carries the post-translational modification Phosphoserine.

The protein belongs to the adaptor complexes medium subunit family. Delta-COP subfamily. Oligomeric complex that consists of at least the alpha, beta, beta', gamma, delta, epsilon and zeta subunits.

The protein localises to the cytoplasm. It is found in the golgi apparatus membrane. The protein resides in the cytoplasmic vesicle. Its subcellular location is the COPI-coated vesicle membrane. In terms of biological role, the coatomer is a cytosolic protein complex that binds to dilysine motifs and reversibly associates with Golgi non-clathrin-coated vesicles, which further mediate biosynthetic protein transport from the ER, via the Golgi up to the trans Golgi network. Coatomer complex is required for budding from Golgi membranes, and is essential for the retrograde Golgi-to-ER transport of dilysine-tagged proteins. In mammals, the coatomer can only be recruited by membranes associated to ADP-ribosylation factors (ARFs), which are small GTP-binding proteins; the complex also influences the Golgi structural integrity, as well as the processing, activity, and endocytic recycling of LDL receptors. In Mus musculus (Mouse), this protein is Coatomer subunit delta (Arcn1).